The primary structure comprises 442 residues: Cytokine receptor-like factor 3 (442 aa).

N-acetylmethionine is present on Met1. Positions 10–57 (ELLLQEARENVEAAQSYRRELGHRLEGLREARRQIKESASQTRDVLKQ) form a coiled coil. The Fibronectin type-III domain maps to 181–274 (PPVQIEELIE…PQIGHSTLVP (94 aa)).

The protein belongs to the cytokine receptor-like factor 3 family. As to expression, expressed in several embryonic and adult tissues, including adult and fetal brain, liver, spleen and pancreas. Expressed in adult, but not fetal kidney. Expressed in skin and squamous cell carcinoma (SCC) and in several other cancer types. Also detected in lesion actinic keratosis (AK).

The protein localises to the cytoplasm. Functionally, may play a role in the negative regulation of cell cycle progression. The protein is Cytokine receptor-like factor 3 (CRLF3) of Homo sapiens (Human).